The sequence spans 496 residues: NADP-dependent glyceraldehyde-3-phosphate dehydrogenase (496 aa).

Residues R116 and 169-170 (NY) each bind substrate. NADP(+) is bound by residues K192, T195, and D230. An NAD(+)-binding site is contributed by 245–249 (GGDTG). The Proton acceptor role is filled by E264. 297–299 (RCT) is a substrate binding site. C298 functions as the Nucleophile in the catalytic mechanism. E391 is an NADP(+) binding site. Position 451 (R451) interacts with substrate.

The protein belongs to the aldehyde dehydrogenase family.

Its subcellular location is the cytoplasm. It is found in the cytosol. The catalysed reaction is D-glyceraldehyde 3-phosphate + NADP(+) + H2O = (2R)-3-phosphoglycerate + NADPH + 2 H(+). Its activity is regulated as follows. Competitive inhibition by NADPH, 3-phospho-D-glycerate and ATP. Its function is as follows. Important as a means of generating NADPH for biosynthetic reactions. May be a main source of cytosolic NADPH for mannitol biosynthesis in leaves. The chain is NADP-dependent glyceraldehyde-3-phosphate dehydrogenase from Apium graveolens (Celery).